The following is a 101-amino-acid chain: Putative protein p25 (101 aa).

This chain is Putative protein p25 (25), found in Acyrthosiphon pisum secondary endosymbiont phage 1 (Bacteriophage APSE-1).